Reading from the N-terminus, the 520-residue chain is Retinoic acid receptor RXR-beta (520 aa).

A disordered region spans residues 1 to 167 (MSWATRPPFL…GGSGPPEDVK (167 aa)). The segment at 1 to 191 (MSWATRPPFL…PGGPGAGKRL (191 aa)) is modulating. Position 25 is an omega-N-methylarginine (R25). The segment covering 64 to 79 (EAGRDGMGDSGRDSRS) has biased composition (basic and acidic residues). Residues 95-118 (SSPPGPPLTPSAPPPPMPPPPLGS) show a composition bias toward pro residues. Residues 119 to 130 (PFPVISSSMGSP) show a composition bias toward low complexity. The segment covering 131 to 140 (GLPPPAPPGF) has biased composition (pro residues). 2 NR C4-type zinc fingers span residues 192–212 (CAICGDRSSGKHYGVYSCEGC) and 228–252 (CRDNKDCTVDKRQRNRCQYCRYQKC). The nuclear receptor DNA-binding region spans 192-257 (CAICGDRSSG…RYQKCLATGM (66 aa)). Residues 258-382 (KREAVQEERQ…HRSIDVRDGI (125 aa)) form a hinge region. The segment covering 263-275 (QEERQRGKDKDGD) has biased composition (basic and acidic residues). 2 disordered regions span residues 263 to 285 (QEERQRGKDKDGDGDGAGGAPEE) and 300 to 323 (QKSDQGVEGPGATGGGGSSPNDPV). The NR LBD domain occupies 283–516 (PEEMPVDRIL…TFLMEMLEAP (234 aa)). A compositionally biased stretch (gly residues) spans 307 to 317 (EGPGATGGGGS).

The protein belongs to the nuclear hormone receptor family. NR2 subfamily. Homodimer (in vitro). Heterodimer with other retinoic acid receptor family members. Binds DNA preferentially as a RAR/RXR heterodimer. Interacts with NR1H3. Interacts with AKAP13. In terms of tissue distribution, in all tissues tested, including brain, thymus, spleen and liver.

The protein localises to the nucleus. The protein resides in the cytoplasm. Receptor for retinoic acid. Retinoic acid receptors bind as heterodimers to their target response elements in response to their ligands, all-trans or 9-cis retinoic acid, and regulate gene expression in various biological processes. The RAR/RXR heterodimers bind to the retinoic acid response elements (RARE). The protein is Retinoic acid receptor RXR-beta (Rxrb) of Mus musculus (Mouse).